The primary structure comprises 179 residues: Large ribosomal subunit protein uL5 (179 aa).

Belongs to the universal ribosomal protein uL5 family. In terms of assembly, part of the 50S ribosomal subunit; part of the 5S rRNA/L5/L18/L25 subcomplex. Contacts the 5S rRNA and the P site tRNA. Forms a bridge to the 30S subunit in the 70S ribosome.

Its function is as follows. This is one of the proteins that bind and probably mediate the attachment of the 5S RNA into the large ribosomal subunit, where it forms part of the central protuberance. In the 70S ribosome it contacts protein S13 of the 30S subunit (bridge B1b), connecting the 2 subunits; this bridge is implicated in subunit movement. Contacts the P site tRNA; the 5S rRNA and some of its associated proteins might help stabilize positioning of ribosome-bound tRNAs. The chain is Large ribosomal subunit protein uL5 from Prochlorococcus marinus (strain NATL2A).